The primary structure comprises 337 residues: MGATIIVGGFWGDEGKGKIVAHVAHSDKPVIIARGGVGPNAGHTVEIDGQKFGVRMIPSGFVYKDAKLLIGAGVLVNPEVFLKEVELLKVGDRARVDYRCAIIEPKHIEADKGSEHLSKKIGTTGTGCGPANVDRVNRVAKQAKDIPELKDYLADVPLEVNQAIENGQFVLIEGSQGFGLSLYYGTYPYVTSKDTTASAIASDVGVGPTRVDDVIVVFKCFPTRVGAGPFPTEMPQEEAEKLGIVEYGTVTGRRRRIGYWDGEFARYSAMVNGATQVAITGVDKLDKECYGVTEWEKLTPKAKKFIEQVEEDVRVPVTLISTGPELKQIIDLRKEKL.

Residues 12–18 and 42–44 each bind GTP; these read GDEGKGK and GHT. Asp13 functions as the Proton acceptor in the catalytic mechanism. Asp13 and Gly42 together coordinate Mg(2+). IMP-binding positions include 13–16, 40–43, Thr124, Arg138, Gln176, Thr191, and Arg253; these read DEGK and NAGH. His43 functions as the Proton donor in the catalytic mechanism. Substrate is bound at residue 249–255; it reads TVTGRRR. GTP-binding positions include Arg255, 281–283, and 321–323; these read GVD and STG.

Belongs to the adenylosuccinate synthetase family. Homodimer. Mg(2+) serves as cofactor.

The protein resides in the cytoplasm. The enzyme catalyses IMP + L-aspartate + GTP = N(6)-(1,2-dicarboxyethyl)-AMP + GDP + phosphate + 2 H(+). Its pathway is purine metabolism; AMP biosynthesis via de novo pathway; AMP from IMP: step 1/2. In terms of biological role, plays an important role in the de novo pathway of purine nucleotide biosynthesis. Catalyzes the first committed step in the biosynthesis of AMP from IMP. The sequence is that of Adenylosuccinate synthetase from Archaeoglobus fulgidus (strain ATCC 49558 / DSM 4304 / JCM 9628 / NBRC 100126 / VC-16).